A 338-amino-acid chain; its full sequence is Phytanoyl-CoA dioxygenase, peroxisomal (338 aa).

Residues 1–30 (MEQLRAAARLQIVLGHLGRPSAGAVVAHPT) constitute a peroxisome transit peptide. Residues lysine 59 and lysine 108 each carry the N6-succinyllysine modification. 2-oxoglutarate contacts are provided by residues lysine 120, methionine 157, 175-177 (HQD), and tryptophan 193. Histidine 175 and aspartate 177 together coordinate Fe cation. 2 positions are modified to N6-succinyllysine: lysine 231 and lysine 252. Histidine 264 is a Fe cation binding site. 2 residues coordinate 2-oxoglutarate: serine 266 and arginine 275. Position 317 is a phosphoserine (serine 317).

Belongs to the PhyH family. Interacts with FKBP52. Interacts with PHYHIP. Fe cation is required as a cofactor. The cofactor is L-ascorbate. It depends on ATP as a cofactor. Requires Mg(2+) as cofactor. Expressed in liver, kidney, and T-cells, but not in spleen, brain, heart, lung and skeletal muscle.

The protein localises to the peroxisome. It catalyses the reaction phytanoyl-CoA + 2-oxoglutarate + O2 = 2-hydroxyphytanoyl-CoA + succinate + CO2. It carries out the reaction 3-methylhexadecanoyl-CoA + 2-oxoglutarate + O2 = 2-hydroxy-3-methylhexadecanoyl-CoA + succinate + CO2. The catalysed reaction is hexadecanoyl-CoA + 2-oxoglutarate + O2 = 2-hydroxyhexadecanoyl-CoA + succinate + CO2. The enzyme catalyses octanoyl-CoA + 2-oxoglutarate + O2 = 2-hydroxyoctanoyl-CoA + succinate + CO2. It catalyses the reaction decanoyl-CoA + 2-oxoglutarate + O2 = 2-hydroxydecanoyl-CoA + succinate + CO2. It carries out the reaction 3-methylbutanoyl-CoA + 2-oxoglutarate + O2 = 2-hydroxy-3-methylbutanoyl-CoA + succinate + CO2. The catalysed reaction is heptadecanoyl-CoA + 2-oxoglutarate + O2 = 2-hydroxyheptadecanoyl-CoA + succinate + CO2. The enzyme catalyses eicosanoyl-CoA + 2-oxoglutarate + O2 = 2-hydroxyeicosanoyl-CoA + succinate + CO2. It catalyses the reaction octadecanoyl-CoA + 2-oxoglutarate + O2 = 2-hydroxyoctadecanoyl-CoA + succinate + CO2. It carries out the reaction dodecanoyl-CoA + 2-oxoglutarate + O2 = 2-hydroxydodecanoyl-CoA + succinate + CO2. The catalysed reaction is tetradecanoyl-CoA + 2-oxoglutarate + O2 = 2-hydroxytetradecanoyl-CoA + succinate + CO2. The enzyme catalyses hexanoyl-CoA + 2-oxoglutarate + O2 = 2-hydroxyhexanoyl-CoA + succinate + CO2. It catalyses the reaction butanoyl-CoA + 2-oxoglutarate + O2 = 2-hydroxybutanoyl-CoA + succinate + CO2. It carries out the reaction 3-methylnonanoyl-CoA + 2-oxoglutarate + O2 = 2-hydroxy-3-methylnonanoyl-CoA + succinate + CO2. The catalysed reaction is 3-methylundecanoyl-CoA + 2-oxoglutarate + O2 = 2-hydroxy-3-methylundecanoyl-CoA + succinate + CO2. The enzyme catalyses 3-methyldodecanoyl-CoA + 2-oxoglutarate + O2 = 2-hydroxy-3-methyldodecanoyl-CoA + succinate + CO2. It functions in the pathway lipid metabolism; fatty acid metabolism. Functionally, catalyzes the 2-hydroxylation of not only racemic phytanoyl-CoA and the isomers of 3-methylhexadecanoyl-CoA, but also a variety of other mono-branched 3-methylacyl-CoA esters (with a chain length of at least seven carbon atoms) and straight-chain acyl-CoA esters (with a chain length longer than four carbon atoms). Does not hydroxylate long and very long straight chain acyl-CoAs or 2-methyl- and 4-methyl-branched acyl-CoAs. The chain is Phytanoyl-CoA dioxygenase, peroxisomal (PHYH) from Homo sapiens (Human).